The primary structure comprises 2034 residues: Pecanex-like protein 3 (2034 aa).

A run of 2 helical transmembrane segments spans residues 33–53 (CFHL…YMVL) and 54–74 (PPSL…FATI). The segment at 96-118 (STMGELEEEPAQGDSNPPRDPGV) is disordered. At serine 127 the chain carries Phosphoserine. Threonine 129 is subject to Phosphothreonine. Disordered regions lie at residues 193–242 (IGDL…PLLK), 260–517 (DRAL…LRPP), and 540–625 (VLPA…SHSR). Polar residues predominate over residues 294 to 303 (KAGSSDSCFS). Over residues 305–319 (TDRETLSSFKSEKTN) the composition is skewed to basic and acidic residues. Asparagine 319 is a glycosylation site (N-linked (GlcNAc...) asparagine). Threonine 370 carries the post-translational modification Phosphothreonine. The span at 391 to 409 (PSKRQPPLRRHSPPGRAPR) shows a compositional bias: basic residues. Phosphoserine occurs at positions 392 and 431. The segment covering 427–436 (GSELSPASSL) has biased composition (polar residues). Over residues 444–460 (TDSSSSTSCYSPESSRG) the composition is skewed to low complexity. Polar residues predominate over residues 488–497 (TQRTPSTASA). At serine 505 the chain carries Phosphoserine. A run of 7 helical transmembrane segments spans residues 790 to 812 (VLEN…LLLL), 819 to 836 (IWVF…YSLL), 852 to 872 (WVIA…IWLL), 880 to 900 (PFPP…FFCA), 903 to 923 (VATV…LPQV), 946 to 968 (SPLT…YGFC), and 980 to 1000 (HVPV…YHLS). Serine 1025 bears the Phosphoserine mark. 4 helical membrane passes run 1053-1073 (LVMC…TVFI), 1078-1098 (VLGF…HYLL), 1244-1264 (FVLT…HAFA), and 1280-1300 (LLSG…VFIM). Serine 1697 is modified (phosphoserine). Asparagine 1770 carries N-linked (GlcNAc...) asparagine glycosylation. Positions 1844–2034 (GGLTSLSNNP…AAQPLLEHQY (191 aa)) are disordered. Residues 1890 to 1910 (RPPPLLQWPPPRLPGPPPASP) are compositionally biased toward pro residues. The residue at position 1909 (serine 1909) is a Phosphoserine. Over residues 1925–1939 (GLLSSEGPSGKWSLG) the composition is skewed to low complexity. Phosphoserine is present on serine 1955. Residues 1969–1978 (LSLSLSLSLS) show a composition bias toward low complexity.

This sequence belongs to the pecanex family.

The protein resides in the membrane. The protein is Pecanex-like protein 3 of Homo sapiens (Human).